A 418-amino-acid chain; its full sequence is D-inositol 3-phosphate glycosyltransferase (418 aa).

1D-myo-inositol 3-phosphate is bound at residue histidine 9. UDP-N-acetyl-alpha-D-glucosamine-binding positions include 15-16 (QP) and glycine 23. 1D-myo-inositol 3-phosphate-binding positions include 20–25 (DSGGMN), lysine 78, tyrosine 110, threonine 134, and arginine 154. UDP-N-acetyl-alpha-D-glucosamine-binding residues include arginine 231, lysine 236, and arginine 294. Residues tyrosine 303, arginine 304, and alanine 306 each contribute to the Mg(2+) site. UDP-N-acetyl-alpha-D-glucosamine is bound by residues glutamate 316 and glutamate 324. Threonine 330 serves as a coordination point for Mg(2+).

Belongs to the glycosyltransferase group 1 family. MshA subfamily. Homodimer.

It catalyses the reaction 1D-myo-inositol 3-phosphate + UDP-N-acetyl-alpha-D-glucosamine = 1D-myo-inositol 2-acetamido-2-deoxy-alpha-D-glucopyranoside 3-phosphate + UDP + H(+). Catalyzes the transfer of a N-acetyl-glucosamine moiety to 1D-myo-inositol 3-phosphate to produce 1D-myo-inositol 2-acetamido-2-deoxy-glucopyranoside 3-phosphate in the mycothiol biosynthesis pathway. The polypeptide is D-inositol 3-phosphate glycosyltransferase (Corynebacterium glutamicum (strain R)).